Here is a 238-residue protein sequence, read N- to C-terminus: Ribonuclease PH (238 aa).

Phosphate is bound by residues R86 and 124 to 126; that span reads GTR.

This sequence belongs to the RNase PH family. In terms of assembly, homohexameric ring arranged as a trimer of dimers.

The catalysed reaction is tRNA(n+1) + phosphate = tRNA(n) + a ribonucleoside 5'-diphosphate. In terms of biological role, phosphorolytic 3'-5' exoribonuclease that plays an important role in tRNA 3'-end maturation. Removes nucleotide residues following the 3'-CCA terminus of tRNAs; can also add nucleotides to the ends of RNA molecules by using nucleoside diphosphates as substrates, but this may not be physiologically important. Probably plays a role in initiation of 16S rRNA degradation (leading to ribosome degradation) during starvation. In Brucella anthropi (strain ATCC 49188 / DSM 6882 / CCUG 24695 / JCM 21032 / LMG 3331 / NBRC 15819 / NCTC 12168 / Alc 37) (Ochrobactrum anthropi), this protein is Ribonuclease PH.